Here is a 304-residue protein sequence, read N- to C-terminus: Arginine-binding protein ArgT (304 aa).

A signal peptide spans 1–26 (MRFPKIPKRAVAATVGIVATSFTLAS). C27 carries the N-palmitoyl cysteine lipid modification. The S-diacylglycerol cysteine moiety is linked to residue C27.

The protein belongs to the bacterial solute-binding protein 3 family. In terms of assembly, the complex is probably composed of two ATP-binding proteins (ArgV), two transmembrane proteins (ArgU) and a solute-binding protein (ArgT).

It is found in the cell membrane. In terms of biological role, part of the ABC transporter complex ArgTUV involved in L-arginine import. May also transport L-citrulline. Binds L-arginine and its molecular precursor L-citrulline, but not L-histidine, L-glutamate, L-glutamine, L-lysine or L-cysteine. The protein is Arginine-binding protein ArgT of Corynebacterium glutamicum (strain ATCC 13032 / DSM 20300 / JCM 1318 / BCRC 11384 / CCUG 27702 / LMG 3730 / NBRC 12168 / NCIMB 10025 / NRRL B-2784 / 534).